The chain runs to 95 residues: uncharacterized protein (95 aa).

Residues 1-24 (MKKLATLTALAGALTMAVATAAQA) constitute a signal peptide (or 21). Residues 55-89 (EGKCGADKAKSAEGKCGEGKCGADKAKSAEGKCGE) are compositionally biased toward basic and acidic residues. A disordered region spans residues 55–95 (EGKCGADKAKSAEGKCGEGKCGADKAKSAEGKCGEGKCGSK).

This is an uncharacterized protein from Haemophilus influenzae (strain ATCC 51907 / DSM 11121 / KW20 / Rd).